The following is a 118-amino-acid chain: Mitochondrial protein YPR099C (118 aa).

It is found in the mitochondrion. Its function is as follows. Essential for the functional mitochondria and respiratory growth. This is Mitochondrial protein YPR099C from Saccharomyces cerevisiae (strain ATCC 204508 / S288c) (Baker's yeast).